A 1096-amino-acid polypeptide reads, in one-letter code: Pullulanase (1096 aa).

The first 19 residues, 1 to 19, serve as a signal peptide directing secretion; the sequence is MLRYTCHALFLGSLVLLSG. Cys20 carries the N-palmitoyl cysteine lipid modification. Cys20 carries the S-diacylglycerol cysteine lipid modification. A compositionally biased stretch (low complexity) spans 24–34; sequence SSSSTSGSPGS. Positions 24-50 are disordered; that stretch reads SSSSTSGSPGSPGNPGNPGTPGTPDPQ. Asp694 (nucleophile) is an active-site residue. Residue Glu723 is the Proton donor of the active site. The disordered stretch occupies residues 1014–1044; it reads QAGRQSGQPCRRHRGGDQRRAGKPDAAGLRR.

The protein belongs to the glycosyl hydrolase 13 family. Homotrimer.

It localises to the cell membrane. The enzyme catalyses Hydrolysis of (1-&gt;6)-alpha-D-glucosidic linkages in pullulan, amylopectin and glycogen, and in the alpha- and beta-limit dextrins of amylopectin and glycogen.. This chain is Pullulanase (pulA), found in Klebsiella aerogenes (Enterobacter aerogenes).